Reading from the N-terminus, the 370-residue chain is Gametogenetin-binding protein 1 (370 aa).

Disordered regions lie at residues 26 to 114 and 240 to 263; these read VGSK…QTLT and PAAPQLALKDGLPHEEKGEREEAV. Over residues 31-49 the composition is skewed to polar residues; it reads GSKSTNKPLTRSQPSSSWE. Residues 225 to 370 form a required for induction of mitochondrial fragmentation region; sequence LYKQLQKSAM…DEMGNWPPPD (146 aa). The segment covering 250–260 has biased composition (basic and acidic residues); that stretch reads GLPHEEKGERE. The interval 298-370 is interaction with GGN; the sequence is KKFRSTDTVG…DEMGNWPPPD (73 aa).

In terms of assembly, interacts with CCDC159. Interacts with isoform 1 and isoform 2 of GGN. In terms of tissue distribution, testis-specific. In the testis, expressed only in germ cells and not in somatic cells. Expression starts in late primary spermatocytes in stage X-XII tubules and gradually increases towards step 1-3 spermatids in stage I-III tubules. Expression then declines continuously and disappears after step 7 spermatids in stage VII tubules (at protein level).

The protein resides in the cytoplasm. The protein localises to the membrane. It is found in the golgi apparatus. It localises to the mitochondrion intermembrane space. In terms of biological role, induces mitochondrial fragmentation, possibly by promoting DNM1L-dependent fission and may play a role in mitochondrial morphogenesis during spermatogenesis. This chain is Gametogenetin-binding protein 1 (Ggnbp1), found in Mus musculus (Mouse).